Here is a 20-residue protein sequence, read N- to C-terminus: Alpha-conotoxin-like ts14a (20 aa).

Cystine bridges form between Cys3/Cys16 and Cys14/Cys20.

In terms of tissue distribution, expressed by the venom duct.

It is found in the secreted. Functionally, alpha-conotoxins act on postsynaptic membranes, they bind to the nicotinic acetylcholine receptors (nAChR) and thus inhibit them. This Conus tessulatus (Tessellate cone) protein is Alpha-conotoxin-like ts14a.